The primary structure comprises 755 residues: Atypical kinase coq-8, mitochondrial (755 aa).

The segment at 57 to 78 (QDVDPLKEPNKTNAPLLSPTLP) is disordered. A compositionally biased stretch (polar residues) spans 67–78 (KTNAPLLSPTLP). Residues 435 to 443 (FACASIGQV) and K457 each bind ATP. D587 acts as the Proton acceptor in catalysis.

The protein belongs to the protein kinase superfamily. ADCK protein kinase family.

The protein resides in the mitochondrion. The protein operates within cofactor biosynthesis; ubiquinone biosynthesis. Functionally, atypical kinase involved in the biosynthesis of coenzyme Q, also named ubiquinone, an essential lipid-soluble electron transporter for aerobic cellular respiration. Its substrate specificity is still unclear: may act as a protein kinase that mediates phosphorylation of coq-3. According to other reports, acts as a small molecule kinase, possibly a lipid kinase that phosphorylates a prenyl lipid in the ubiquinone biosynthesis pathway, as suggested by its ability to bind coenzyme Q lipid intermediates. The chain is Atypical kinase coq-8, mitochondrial (coq-8) from Caenorhabditis elegans.